We begin with the raw amino-acid sequence, 292 residues long: 4-diphosphocytidyl-2-C-methyl-D-erythritol kinase (292 aa).

Lys10 is an active-site residue. 100-110 contributes to the ATP binding site; it reads PIGSGLGGGSS. Asp142 is an active-site residue.

Belongs to the GHMP kinase family. IspE subfamily. As to quaternary structure, homodimer.

It carries out the reaction 4-CDP-2-C-methyl-D-erythritol + ATP = 4-CDP-2-C-methyl-D-erythritol 2-phosphate + ADP + H(+). Its pathway is isoprenoid biosynthesis; isopentenyl diphosphate biosynthesis via DXP pathway; isopentenyl diphosphate from 1-deoxy-D-xylulose 5-phosphate: step 3/6. Catalyzes the phosphorylation of the position 2 hydroxy group of 4-diphosphocytidyl-2C-methyl-D-erythritol. In Buchnera aphidicola subsp. Schizaphis graminum (strain Sg), this protein is 4-diphosphocytidyl-2-C-methyl-D-erythritol kinase.